A 476-amino-acid polypeptide reads, in one-letter code: Glutamyl-tRNA(Gln) amidotransferase subunit A (476 aa).

Residues Lys-70 and Ser-145 each act as charge relay system in the active site. Ser-169 functions as the Acyl-ester intermediate in the catalytic mechanism.

The protein belongs to the amidase family. GatA subfamily. Heterotrimer of A, B and C subunits.

The enzyme catalyses L-glutamyl-tRNA(Gln) + L-glutamine + ATP + H2O = L-glutaminyl-tRNA(Gln) + L-glutamate + ADP + phosphate + H(+). Functionally, allows the formation of correctly charged Gln-tRNA(Gln) through the transamidation of misacylated Glu-tRNA(Gln) in organisms which lack glutaminyl-tRNA synthetase. The reaction takes place in the presence of glutamine and ATP through an activated gamma-phospho-Glu-tRNA(Gln). The chain is Glutamyl-tRNA(Gln) amidotransferase subunit A from Methanosarcina acetivorans (strain ATCC 35395 / DSM 2834 / JCM 12185 / C2A).